The sequence spans 218 residues: Glutathione S-transferase A (218 aa).

N-acetylserine is present on serine 1. In terms of domain architecture, GST N-terminal spans 2-82 (GKPVLHYFNV…YIATKYNLYG (81 aa)). Lysine 3 is modified (N6-succinyllysine). Glutathione contacts are provided by residues tyrosine 8, lysine 44, 53–54 (QV), and 66–67 (QS). The GST C-terminal domain occupies 84–206 (DTKERLLIDM…LQPGSQRKPF (123 aa)).

It belongs to the GST superfamily. Alpha family. As to quaternary structure, homodimer or heterodimer of GSTA1 and GSTA2.

The protein resides in the cytoplasm. The enzyme catalyses RX + glutathione = an S-substituted glutathione + a halide anion + H(+). It catalyses the reaction prostaglandin A2 + glutathione = prostaglandin A2-S-(R)-glutathione. It carries out the reaction prostaglandin J2 + glutathione = prostaglandin J2-S-(R)-glutathione. The catalysed reaction is (13S)-hydroperoxy-(9Z,11E)-octadecadienoate + 2 glutathione = (13S)-hydroxy-(9Z,11E)-octadecadienoate + glutathione disulfide + H2O. The enzyme catalyses androst-5-ene-3,17-dione = androst-4-ene-3,17-dione. Functionally, glutathione S-transferase that catalyzes the nucleophilic attack of the sulfur atom of glutathione on the electrophilic groups of a wide range of exogenous and endogenous compounds. Involved in the formation of glutathione conjugates of both prostaglandin A2 (PGA2) and prostaglandin J2 (PGJ2). It also catalyzes the isomerization of D5-androstene-3,17-dione (AD) into D4-androstene-3,17-dione and may therefore play an important role in hormone biosynthesis. Through its glutathione-dependent peroxidase activity toward the fatty acid hydroperoxide (13S)-hydroperoxy-(9Z,11E)-octadecadienoate/13-HPODE it is also involved in the metabolism of oxidized linoleic acid. The polypeptide is Glutathione S-transferase A (Cavia porcellus (Guinea pig)).